Consider the following 780-residue polypeptide: Semaphorin-3G (780 aa).

Positions 1 to 22 (MDPSAWAICCLLGSLLFHVGIP) are cleaved as a signal peptide. The Sema domain occupies 32-519 (RLRLSYRDLL…SPLGVARLQL (488 aa)). A glycan (N-linked (GlcNAc...) asparagine) is linked at asparagine 44. The cysteines at positions 105 and 116 are disulfide-linked. Residue asparagine 127 is glycosylated (N-linked (GlcNAc...) asparagine). Disulfide bonds link cysteine 134–cysteine 143, cysteine 270–cysteine 382, cysteine 294–cysteine 342, cysteine 522–cysteine 540, and cysteine 603–cysteine 655. Residues 569-671 (PAVQCLGQGQ…FSQTVVRFAL (103 aa)) form the Ig-like C2-type domain. Asparagine 652 carries an N-linked (GlcNAc...) asparagine glycan.

Belongs to the semaphorin family. As to expression, highly expressed in lung and kidney. Weakly expressed in brain.

Its subcellular location is the secreted. In terms of biological role, has chemorepulsive activities for sympathetic axons. Ligand of NRP2. The sequence is that of Semaphorin-3G (Sema3g) from Mus musculus (Mouse).